The primary structure comprises 20 residues: Putative beta-neurotoxin (20 aa).

One can recognise an LCN-type CS-alpha/beta domain in the interval 1 to 20; it reads KDGYLVGSDGCKYSCLTRPG.

In terms of tissue distribution, expressed by the venom gland.

It is found in the secreted. In terms of biological role, beta toxins bind voltage-independently at site-4 of sodium channels (Nav) and shift the voltage of activation toward more negative potentials thereby affecting sodium channel activation and promoting spontaneous and repetitive firing. The protein is Putative beta-neurotoxin of Tityus pachyurus (Colombian scorpion).